A 390-amino-acid polypeptide reads, in one-letter code: COP9/Signalosome and eIF3 complex-shared subunit 1 (390 aa).

One can recognise a PCI domain in the interval 188–351 (QAAKVMTALL…RTLIVSSYQH (164 aa)).

Belongs to the eIF-3 subunit M family. As to quaternary structure, component of the eukaryotic translation initiation factor 3 (eIF-3) complex. Within the eIF-3 complex, interacts directly with eif-3.F. Component of the CSN complex, composed of csn-1, csn-2, csn-3, csn-4, csn-5, csn-6 and csn-7. Within the CSN complex, interacts directly with csn-1 and csn-4.

The protein localises to the cytoplasm. Functionally, component of the eukaryotic translation initiation factor 3 (eIF-3) complex, which is involved in protein synthesis of a specialized repertoire of mRNAs and, together with other initiation factors, stimulates binding of mRNA and methionyl-tRNAi to the 40S ribosome. The eIF-3 complex specifically targets and initiates translation of a subset of mRNAs involved in cell proliferation (Potential). Component of the COP9 signalosome complex (CSN), a complex involved in various cellular and developmental processes. The CSN complex is an essential regulator of the ubiquitin (Ubl) conjugation pathway by mediating the deneddylation of the cullin subunits of the SCF-type E3 ligase complexes, leading to decrease the Ubl ligase activity of SCF. The CSN complex plays an essential role in embryogenesis and oogenesis and is required to regulate microtubule stability in the early embryo. Mediates mei-1 targeting for degradation at the meiosis to mitosis transition via deneddylation of cul-3. This chain is COP9/Signalosome and eIF3 complex-shared subunit 1, found in Caenorhabditis elegans.